The following is a 461-amino-acid chain: Ribosomal protein uS12 methylthiotransferase RimO (461 aa).

One can recognise an MTTase N-terminal domain in the interval 13 to 128 (PKVGFVSLGC…VMQHVHMHLP (116 aa)). [4Fe-4S] cluster contacts are provided by C22, C58, C87, C159, C163, and C166. A Radical SAM core domain is found at 145–390 (LTPRHYAYLK…MEVAEEVSAK (246 aa)). The 69-residue stretch at 393-461 (AKKVGKTLKV…ADGHDLWGEV (69 aa)) folds into the TRAM domain.

The protein belongs to the methylthiotransferase family. RimO subfamily. Requires [4Fe-4S] cluster as cofactor.

It is found in the cytoplasm. It carries out the reaction L-aspartate(89)-[ribosomal protein uS12]-hydrogen + (sulfur carrier)-SH + AH2 + 2 S-adenosyl-L-methionine = 3-methylsulfanyl-L-aspartate(89)-[ribosomal protein uS12]-hydrogen + (sulfur carrier)-H + 5'-deoxyadenosine + L-methionine + A + S-adenosyl-L-homocysteine + 2 H(+). Its function is as follows. Catalyzes the methylthiolation of an aspartic acid residue of ribosomal protein uS12. This Paraburkholderia xenovorans (strain LB400) protein is Ribosomal protein uS12 methylthiotransferase RimO.